A 203-amino-acid polypeptide reads, in one-letter code: Synaptosomal-associated protein 25-B (203 aa).

Over residues 1–11 the composition is skewed to basic and acidic residues; it reads MADEADMRNEL. A disordered region spans residues 1-25; that stretch reads MADEADMRNELTDMQARADQLGDES. 2 consecutive t-SNARE coiled-coil homology domains span residues 19 to 81 and 137 to 199; these read DQLG…LTDL and DARE…ATKM.

The protein belongs to the SNAP-25 family.

The protein localises to the synapse. Its subcellular location is the synaptosome. The protein resides in the cell membrane. May play an important role in the synaptic function of specific neuronal systems. Associates with proteins involved in vesicle docking and membrane fusion. The polypeptide is Synaptosomal-associated protein 25-B (snap25b) (Carassius auratus (Goldfish)).